Reading from the N-terminus, the 1096-residue chain is Constitutive coactivator of PPAR-gamma-like protein 2 (1096 aa).

Low complexity predominate over residues 35–59; that stretch reads QQQHLHRQLPPTAALAPGAPRAARG. Disordered stretches follow at residues 35 to 113, 508 to 579, and 971 to 1096; these read QQQH…PPQL, NYLP…DGEP, and SRSS…RKED. Omega-N-methylarginine is present on arginine 58. Basic residues predominate over residues 82–95; that stretch reads TRHHHPAHHFHHHG. Residues 101 to 113 are compositionally biased toward pro residues; the sequence is LHPPLPPPPPPQL. The span at 540–559 shows a compositional bias: basic and acidic residues; it reads HITEAFHHQPEWGNPNRDRG. Arginine 977 carries the omega-N-methylarginine modification. Composition is skewed to basic and acidic residues over residues 1041-1050 and 1076-1096; these read IKEEKSDHRL and NREKNHLQEQKLETVAQRKED. Lysine 1042 is covalently cross-linked (Glycyl lysine isopeptide (Lys-Gly) (interchain with G-Cter in SUMO2)).

This sequence belongs to the constitutive coactivator of PPAR-gamma family. In terms of tissue distribution, expressed at low levels in a number of tissues.

The chain is Constitutive coactivator of PPAR-gamma-like protein 2 (FAM120C) from Homo sapiens (Human).